The following is an 89-amino-acid chain: Small ribosomal subunit protein uS15 (89 aa).

The segment at 1–23 (MTLNTQEKQKLINTHQNHGTDTG) is disordered.

It belongs to the universal ribosomal protein uS15 family. As to quaternary structure, part of the 30S ribosomal subunit. Forms a bridge to the 50S subunit in the 70S ribosome, contacting the 23S rRNA.

One of the primary rRNA binding proteins, it binds directly to 16S rRNA where it helps nucleate assembly of the platform of the 30S subunit by binding and bridging several RNA helices of the 16S rRNA. In terms of biological role, forms an intersubunit bridge (bridge B4) with the 23S rRNA of the 50S subunit in the ribosome. The chain is Small ribosomal subunit protein uS15 from Prochlorococcus marinus (strain MIT 9211).